The sequence spans 282 residues: U1 small nuclear ribonucleoprotein A (282 aa).

N-acetylalanine is present on A2. In terms of domain architecture, RRM 1 spans 10-89 (HTIYINNLNE…KPMRIQYAKT (80 aa)). K60 is subject to N6-acetyllysine. The tract at residues 101–141 (FVERDRKREKRKPKSQETPAAKKAVQGGAAAPVVGTVQGPV) is disordered. Over residues 119–141 (PAAKKAVQGGAAAPVVGTVQGPV) the composition is skewed to low complexity. R152 carries the post-translational modification Omega-N-methylarginine. The 75-residue stretch at 208–282 (HILFLTNLPE…NAMKISFAKK (75 aa)) folds into the RRM 2 domain.

Belongs to the RRM U1 A/B'' family. As to quaternary structure, U1 snRNP is composed of the 7 core Sm proteins SNRPB, SNRPD1, SNRPD2, SNRPD3, SNRPE, SNRPF and SNRPG that assemble in a heptameric protein ring on the Sm site of the small nuclear RNA to form the core snRNP, and at least three U1 snRNP-specific proteins SNRNP70/U1-70K, SNRPA/U1-A and SNRPC/U1-C. Interacts with SFPQ; component of a snRNP-free complex with SFPQ.

The protein localises to the nucleus. Component of the spliceosomal U1 snRNP, which is essential for recognition of the pre-mRNA 5' splice-site and the subsequent assembly of the spliceosome. U1 snRNP is the first snRNP to interact with pre-mRNA. This interaction is required for the subsequent binding of U2 snRNP and the U4/U6/U5 tri-snRNP. SNRPA binds stem loop II of U1 snRNA. In a snRNP-free form (SF-A) may be involved in coupled pre-mRNA splicing and polyadenylation process. May bind preferentially to the 5'-UGCAC-3' motif on RNAs. The chain is U1 small nuclear ribonucleoprotein A (SNRPA) from Bos taurus (Bovine).